A 283-amino-acid polypeptide reads, in one-letter code: KNFALAILVVTFVVAVFGNTNLDPPTRPTRLRREAKPEAEPGNNRPVYIPQPRPPHPRLRREAEPEAEPGNNRPVYIPQPRPPHPRLRREAELEAEPGNNRPVYISQPRPPHPRLRREAEPEAEPGNNRPVYIPQPRPPHPRLRREAELEAEPGNNRPVYISQPRPPHPRLRREAEPEAEPGNNRPVYIPQPRPPHPRLRREAEPEAEPGNNRPVYIPQPRPPHPRLRREAEPEAEPGNNRPVYIPQPRPPHPRLRREAKPEAKPGNNRPVYIPQPRPPHPRI.

The first 18 residues, 1–18 (KNFALAILVVTFVVAVFG), serve as a signal peptide directing secretion. 9 consecutive propeptides follow at residues 19 to 41 (NTNL…EAEP), 62 to 69 (EAEPEAEP), 90 to 97 (EAELEAEP), 118 to 125 (EAEPEAEP), 146 to 153 (EAELEAEP), 174 to 181 (EAEPEAEP), 202 to 209 (EAEPEAEP), 230 to 237 (EAEPEAEP), and 258 to 265 (EAKPEAKP). The disordered stretch occupies residues 19-283 (NTNLDPPTRP…PQPRPPHPRI (265 aa)). A compositionally biased stretch (pro residues) spans 273–283 (IPQPRPPHPRI).

This sequence belongs to the apidaecin family.

It is found in the secreted. Apidaecins have bactericidal activity; predominantly against Gram-negative bacteria. They seem to interfere with cell propagation. This Apis mellifera (Honeybee) protein is Apidaecins type 73 (APID73).